Reading from the N-terminus, the 204-residue chain is LexA repressor (204 aa).

Positions 28–48 (VREIGEAVGLASSSTVHGHLD) form a DNA-binding region, H-T-H motif. Catalysis depends on for autocatalytic cleavage activity residues S126 and K164.

The protein belongs to the peptidase S24 family. Homodimer.

The catalysed reaction is Hydrolysis of Ala-|-Gly bond in repressor LexA.. Represses a number of genes involved in the response to DNA damage (SOS response), including recA and lexA. In the presence of single-stranded DNA, RecA interacts with LexA causing an autocatalytic cleavage which disrupts the DNA-binding part of LexA, leading to derepression of the SOS regulon and eventually DNA repair. In Exiguobacterium sibiricum (strain DSM 17290 / CCUG 55495 / CIP 109462 / JCM 13490 / 255-15), this protein is LexA repressor.